A 326-amino-acid chain; its full sequence is MDNAFSPSDLKTILHSKRANVYYLQHCRILVNGGRVEYVTEEGNQSLYWNIPIANTSVVMLGTGTSVTQAAMREFARAGVMIGFCGGGGTPLFAANEAEVAVSWLSPQSEYRPTEYLQDWVSFWFDDEKRLAAAIAFQQVRITQIRQHWLGSRLSRESRFTFKSEHLQALLDRYQKGLTDCRTSNDVLVQEAMMTKALYRLAANAVSYGDFTRAKRGGGTDLANRFLDHGNYLAYGLAAVSTWVLGLPHGLAVLHGKTRRGGLVFDVADLIKDALVLPQAFIAAMEGEDEQEFRQRCLTAFQQSEALDVMIGSLQDVASKLSQVVR.

The Mn(2+) site is built by glutamate 191, histidine 255, and aspartate 269.

Belongs to the CRISPR-associated endonuclease Cas1 family. Homodimer. Interacts with Cas3, in the absence of crRNA. Mg(2+) serves as cofactor. It depends on Mn(2+) as a cofactor.

CRISPR (clustered regularly interspaced short palindromic repeat), is an adaptive immune system that provides protection against mobile genetic elements (viruses, transposable elements and conjugative plasmids). CRISPR clusters contain sequences complementary to antecedent mobile elements and target invading nucleic acids. CRISPR clusters are transcribed and processed into CRISPR RNA (crRNA). Acts as a dsDNA endonuclease. Involved in the integration of spacer DNA into the CRISPR cassette. This Pectobacterium atrosepticum (strain SCRI 1043 / ATCC BAA-672) (Erwinia carotovora subsp. atroseptica) protein is CRISPR-associated endonuclease Cas1.